Here is a 319-residue protein sequence, read N- to C-terminus: Taste receptor type 2 member 14 (319 aa).

Residues 1–7 (MDGVIKS) are Extracellular-facing. A helical membrane pass occupies residues 8–28 (IFTFILIVEFIIGNLGNSFIV). The Cytoplasmic portion of the chain corresponds to 29 to 55 (LVNCIDWVKRRKISLVDQILIALAISR). Residues 56-76 (ISLVWSIFGSWCVSVFFPALF) form a helical membrane-spanning segment. Residues 77–87 (ATEKLLRMLTN) are Extracellular-facing. Cholesterol-binding residues include Thr86 and Trp89. Residues 88–108 (IWTVTNHFSVWLATILGTFYF) traverse the membrane as a helical segment. Over 109 to 129 (LKIANFSNSIFLYLKWRVKKV) the chain is Cytoplasmic. The chain crosses the membrane as a helical span at residues 130–150 (VLVLLLVTLGLLFLNILLINI). Over 151–184 (HINASINGYRGNMTCSSASCNFIRFSRAIALTST) the chain is Extracellular. N-linked (GlcNAc...) asparagine glycans are attached at residues Asn153 and Asn162. Ala180 is a binding site for cholesterol. Residues 185 to 205 (VFVLIPFTLSLATSLLLSFSL) traverse the membrane as a helical segment. Topologically, residues 206–233 (WKHHKKMQHTVKGYRDVSTKAHRGVMQT) are cytoplasmic. The chain crosses the membrane as a helical span at residues 234–254 (VITFLLLYAVFLLTFFISIWA). At 255-263 (SVRLKENQI) the chain is on the extracellular side. The helical transmembrane segment at 264 to 284 (IILSEMMGLAYPSGHSCVLIL) threads the bilayer. Residues Ser267 and Met270 each contribute to the cholesterol site. Topologically, residues 285-319 (GNKKLRQASLSVLWWLRYRFKHGEPSGHKEFRESS) are cytoplasmic.

The protein belongs to the G-protein coupled receptor T2R family. Core component of the TAS2R14-GNAI1 complex, consisting of TAS2R14, GNAI1, GNB1 and GNG2; within the complex interacts with GNAI1. Core component of the TAS2R14-GNAT3 complex, consisting of TAS2R14, GNAT3, GNB1 and GNG2; within the complex interacts with GNAT3. Core component of the TAS2R14-GNAS2 complex, consisting of TAS2R14, GNAS2, GNB1 and GNG2; within the complex interacts with GNAS2.

The protein resides in the membrane. It carries out the reaction Ca(2+)(in) = Ca(2+)(out). The catalysed reaction is 3',5'-cyclic AMP(in) = 3',5'-cyclic AMP(out). Its activity is regulated as follows. Basal activity is enhanced by binding to bitter tastants, such as flufenamic acid and aristolochic acid. Regulated by cholesterol in a concentration-dependent manner. Its function is as follows. Gustducin-linked G-protein coupled receptor that plays a role in the perception of bitterness. The activity of this receptor stimulates GNAT3, activating the gustducin G-protein pathway. Likely plays a role in sensing the chemical composition of the gastrointestinal content and other extra-oral tissues via the inhibitory G-protein pathways. The sequence is that of Taste receptor type 2 member 14 (TAS2R14) from Macaca mulatta (Rhesus macaque).